The following is a 221-amino-acid chain: Serotriflin (221 aa).

The SCP domain occupies 19–147 (LDKHNALRRS…SYNYYYVCHY (129 aa)). Asn-48 carries N-linked (GlcNAc...) asparagine glycosylation. Cystine bridges form between Cys-56–Cys-134, Cys-73–Cys-148, Cys-129–Cys-145, Cys-167–Cys-174, Cys-170–Cys-179, Cys-183–Cys-216, Cys-192–Cys-210, and Cys-201–Cys-214. Positions 183–216 (CKHVDRYSNCNSLVQQISCQSNNMNTDCPASCFC) constitute a ShKT domain.

In terms of assembly, forms a stable, non-covalent complex with SSP-2.

It is found in the secreted. The sequence is that of Serotriflin from Protobothrops flavoviridis (Habu).